Here is a 1083-residue protein sequence, read N- to C-terminus: Solute carrier family 12 member 7 (1083 aa).

Positions 1 to 55 (MPTNFTVVPVEARADGAGDEAAERTEEPESPESVDQTSPTPGDGNPRENSPFINN) are disordered. The Cytoplasmic segment spans residues 1-119 (MPTNFTVVPV…RREVKAPRMG (119 aa)). Residues 12–27 (ARADGAGDEAAERTEE) are compositionally biased toward basic and acidic residues. 2 positions are modified to phosphoserine: S30 and S33. T37 bears the Phosphothreonine mark. Phosphoserine occurs at positions 50 and 62. A discontinuously helical membrane pass occupies residues 120–142 (TFIGVYLPCLQNILGVILFLRLT). Positions 131 and 132 each coordinate K(+). Chloride is bound at residue V135. The Extracellular portion of the chain corresponds to 143–149 (WIVGAAG). Residues 150-172 (VMESFLIVAMCCTCTMLTAISMS) traverse the membrane as a helical segment. Residues 173–196 (AIATNGVVPAGGSYYMISRSLGPE) are Cytoplasmic-facing. Residues 197 to 225 (FGGAVGLCFYLGTTFAGAMYILGTIEIFL) form a helical membrane-spanning segment. The Extracellular portion of the chain corresponds to 226–249 (TYISPSAAIFQAETADGEAAALLN). Helical transmembrane passes span 250–271 (NMRVYGSCALALMAVVVFVGVK) and 272–300 (YVNKLALVFLACVVLSILAIYAGVIKTAF). Residues 301–419 (APPDIPVCLL…PYVLTDIMTY (119 aa)) lie on the Extracellular side of the membrane. Residue N312 is glycosylated (N-linked (GlcNAc...) (high mannose) asparagine). N-linked (GlcNAc...) (complex) asparagine glycosylation is found at N331 and N344. N360 is a glycosylation site (N-linked (GlcNAc...) (high mannose) asparagine). A helical membrane pass occupies residues 420 to 440 (FTMLVGIYFPSVTGIMAGSNR). K(+) contacts are provided by P429 and T432. Chloride is bound at residue P429. Residues G433 and I434 each coordinate chloride. Over 441–450 (SGDLKDAQKS) the chain is Cytoplasmic. A helical transmembrane segment spans residues 451–473 (IPTGTILAIVTTSFIYLSCIVLF). The Extracellular segment spans residues 474–504 (GACIEGVVLRDKFGEALQGNLVIGMLAWPSP). A helical transmembrane segment spans residues 505–531 (WVIVIGSFFSTCGAGLQSLTGAPRLLQ). Over 532–554 (AIARDGIIPFLQVFGHGKANGEP) the chain is Cytoplasmic. Helical transmembrane passes span 555–573 (TWALLLTALICETGILIAS) and 574–598 (LDSVAPILSMFFLMCYMFVNLACAV). Y589 is a chloride binding site. At 599-612 (QTLLRTPNWRPRFK) the chain is on the cytoplasmic side. 2 consecutive transmembrane segments (helical) span residues 613 to 635 (FYHWTLSFLGMSLCLALMFICSW) and 636 to 651 (YYALFAMLIAGCIYKY). The Cytoplasmic segment spans residues 652 to 1083 (IEYRGAEKEW…GGREVITIYS (432 aa)). A scissor helix region spans residues 664-680 (GIRGLSLNAARYALLRV). Phosphothreonine occurs at positions 973 and 980.

Belongs to the SLC12A transporter family. K/Cl co-transporter subfamily. As to quaternary structure, homodimer; adopts a domain-swap conformation at the scissor helices connecting the transmembrane domain and C-terminal domain. Heterodimer with K-Cl cotransporter SLC12A5. Post-translationally, glycosylation at Asn-331 and Asn-344 is required for proper trafficking to the cell surface, and augments protein stability. Detected in proximal tubules in the kidney, in particular in basolateral membranes of intercalated cells in the cortical collecting duct.

The protein localises to the cell membrane. The catalysed reaction is K(+)(in) + chloride(in) = K(+)(out) + chloride(out). With respect to regulation, activated by N-ethylmaleimide (NEM). Inhibited by furosemide, DIDS and bumetanide. The inhibition is much stronger in the presence of 50 mM K(+) in the uptake medium. Inhibited by DIOA. Inhibited by WNK3. Mediates electroneutral potassium-chloride cotransport when activated by cell swelling. May mediate K(+) uptake into Deiters' cells in the cochlea and contribute to K(+) recycling in the inner ear. Important for the survival of cochlear outer and inner hair cells and the maintenance of the organ of Corti. May be required for basolateral Cl(-) extrusion in the kidney and contribute to renal acidification. The chain is Solute carrier family 12 member 7 (Slc12a7) from Mus musculus (Mouse).